Consider the following 682-residue polypeptide: Elongation factor G (682 aa).

A tr-type G domain is found at 8-282 (QKFRNFGIMA…AVVDYLPSPV (275 aa)). Residues 17–24 (AHIDAGKT), 81–85 (DTPGH), and 135–138 (NKMD) contribute to the GTP site.

The protein belongs to the TRAFAC class translation factor GTPase superfamily. Classic translation factor GTPase family. EF-G/EF-2 subfamily.

It is found in the cytoplasm. Its function is as follows. Catalyzes the GTP-dependent ribosomal translocation step during translation elongation. During this step, the ribosome changes from the pre-translocational (PRE) to the post-translocational (POST) state as the newly formed A-site-bound peptidyl-tRNA and P-site-bound deacylated tRNA move to the P and E sites, respectively. Catalyzes the coordinated movement of the two tRNA molecules, the mRNA and conformational changes in the ribosome. This is Elongation factor G from Malacoplasma penetrans (strain HF-2) (Mycoplasma penetrans).